The following is an 86-amino-acid chain: Cell division topological specificity factor (86 aa).

Belongs to the MinE family.

In terms of biological role, prevents the cell division inhibition by proteins MinC and MinD at internal division sites while permitting inhibition at polar sites. This ensures cell division at the proper site by restricting the formation of a division septum at the midpoint of the long axis of the cell. This is Cell division topological specificity factor from Rhizobium etli (strain ATCC 51251 / DSM 11541 / JCM 21823 / NBRC 15573 / CFN 42).